Here is a 365-residue protein sequence, read N- to C-terminus: MISTPYYLIDKSALLRNLQVIDQVRERSGAKVLLALKCFATWSVFDLMQQYMDGTTSSSLYEVKLGHQKFGGETHAYSVAFADHEIDEVVAHCDKIIFNSISQFQRFSSHAGNKPKGLRLNPGVSCASFDLADPARPFSRLGESDPARILSIIDQLDGVMIHNNCENRDFERFDALLTEVEQRYGEILHRLSWVSLGGGISFTTPGYSIDAFCERLRRFAQTYDVQVYLEPGEATVRDTTTLEVSVVDIGFNGKNLAVVDSSTEAHMLDLLIYRETAPIKNAQGDHAYQICGKTCLAGDIFGEARFEQPLQIGDRISIGDAGGYTMVKKNWFNGVHMPAIAIKEADGSVRAVREFSFDDYVSSLS.

K37 carries the post-translational modification N6-(pyridoxal phosphate)lysine. E233 and D269 together coordinate substrate.

This sequence belongs to the Orn/Lys/Arg decarboxylase class-II family. NspC subfamily. As to quaternary structure, homodimer. It depends on pyridoxal 5'-phosphate as a cofactor.

It is found in the cytoplasm. It carries out the reaction carboxynorspermidine + H(+) = norspermidine + CO2. It catalyses the reaction carboxyspermidine + H(+) = spermidine + CO2. In terms of biological role, catalyzes the decarboxylation of carboxynorspermidine and carboxyspermidine. The protein is Carboxynorspermidine/carboxyspermidine decarboxylase of Herminiimonas arsenicoxydans.